Here is an 82-residue protein sequence, read N- to C-terminus: Small ribosomal subunit protein bS16 (82 aa).

It belongs to the bacterial ribosomal protein bS16 family.

The chain is Small ribosomal subunit protein bS16 from Pseudoalteromonas translucida (strain TAC 125).